The chain runs to 182 residues: Large ribosomal subunit protein uL15 (182 aa).

Residues 1 to 52 form a disordered region; sequence MDLSSLRPAKGAVKNKKRIGRGPGSGNGTTAGKGNKGQQSRSGYTRPVSEGG. Gly residues predominate over residues 21 to 35; that stretch reads RGPGSGNGTTAGKGN.

The protein belongs to the universal ribosomal protein uL15 family. As to quaternary structure, part of the 50S ribosomal subunit.

Functionally, binds to the 23S rRNA. The polypeptide is Large ribosomal subunit protein uL15 (Chlorobium phaeobacteroides (strain BS1)).